A 407-amino-acid chain; its full sequence is Aminomethyltransferase, mitochondrial (407 aa).

Residues 1–29 (MRGGLWQLGQSITRRLGQSDKKTIVRRCY) constitute a mitochondrion transit peptide. Substrate is bound by residues Glu234, Arg265, and Tyr403.

Belongs to the GcvT family. In terms of assembly, the glycine cleavage system is composed of four proteins: P, T, L and H.

The protein localises to the mitochondrion. It carries out the reaction N(6)-[(R)-S(8)-aminomethyldihydrolipoyl]-L-lysyl-[protein] + (6S)-5,6,7,8-tetrahydrofolate = N(6)-[(R)-dihydrolipoyl]-L-lysyl-[protein] + (6R)-5,10-methylene-5,6,7,8-tetrahydrofolate + NH4(+). The glycine cleavage system catalyzes the degradation of glycine. This chain is Aminomethyltransferase, mitochondrial (GDCST), found in Flaveria anomala (Yellowtops).